The sequence spans 97 residues: uncharacterized protein (97 aa).

A compositionally biased stretch (basic and acidic residues) spans Met-1–Pro-20. The tract at residues Met-1–Arg-30 is disordered.

This is an uncharacterized protein from Escherichia coli O157:H7.